Consider the following 311-residue polypeptide: 4-hydroxy-tetrahydrodipicolinate synthase (311 aa).

Thr51 is a pyruvate binding site. Residue Tyr140 is the Proton donor/acceptor of the active site. Catalysis depends on Lys168, which acts as the Schiff-base intermediate with substrate. Position 209 (Ile209) interacts with pyruvate.

It belongs to the DapA family. In terms of assembly, homotetramer; dimer of dimers.

Its subcellular location is the cytoplasm. It carries out the reaction L-aspartate 4-semialdehyde + pyruvate = (2S,4S)-4-hydroxy-2,3,4,5-tetrahydrodipicolinate + H2O + H(+). It participates in amino-acid biosynthesis; L-lysine biosynthesis via DAP pathway; (S)-tetrahydrodipicolinate from L-aspartate: step 3/4. In terms of biological role, catalyzes the condensation of (S)-aspartate-beta-semialdehyde [(S)-ASA] and pyruvate to 4-hydroxy-tetrahydrodipicolinate (HTPA). The chain is 4-hydroxy-tetrahydrodipicolinate synthase from Streptococcus pneumoniae (strain 70585).